The chain runs to 380 residues: MAGSDVDSEGPARRGGAARRPGAPGGPGSEAAAGCPEPLSTAEAPAESATLPAWMRLYFYGMHGITLDVLVSSARRFARSPDLRMLGFSSPYRCLLHSLTHFALEKVYLQQRRCPNAFVFNFLLYPSAHVGLQTLAGQALLLSLGGGAGVAVAPGALDLALQYVLALYHCQVFLKRFLRLRYGRQRRRQQQQQQQQQQQQRRGALPVPPGARVPTAAGARRRRPRGPRGAGGAPSQGLPDLPRFLFFGMHGFLDEIFFTFFFNVLGQGDGTTSGHTSLWSFFMYGSCSFVVEKLYFHLHYSRGWGTWKRVPIYVIFIYVWELSWGLGLRTCGACSWDYSHYPLNFMGLITLMYLPGWIFLSVYQDLISNVLWRVQYVPAN.

Residues 1–40 (MAGSDVDSEGPARRGGAARRPGAPGGPGSEAAAGCPEPLS) are disordered. 2 consecutive transmembrane segments (helical) span residues 51–71 (LPAWMRLYFYGMHGITLDVLV) and 117–137 (AFVFNFLLYPSAHVGLQTLAG). Residues 188 to 236 (RQQQQQQQQQQQQRRGALPVPPGARVPTAAGARRRRPRGPRGAGGAPSQ) form a disordered region. The span at 190–202 (QQQQQQQQQQQRR) shows a compositional bias: low complexity. Transmembrane regions (helical) follow at residues 244-264 (FLFFGMHGFLDEIFFTFFFNV), 278-298 (LWSFFMYGSCSFVVEKLYFHL), 310-330 (VPIYVIFIYVWELSWGLGLRT), and 343-363 (LNFMGLITLMYLPGWIFLSVY).

Belongs to the TMEM229 family.

It is found in the membrane. The sequence is that of Transmembrane protein 229A (TMEM229A) from Homo sapiens (Human).